A 284-amino-acid chain; its full sequence is Sulfotransferase 4A1 (284 aa).

Thr-8, Thr-11, and Thr-205 each carry phosphothreonine.

This sequence belongs to the sulfotransferase 1 family. Highly expressed in the cerebral cortex and frontal lobe, slightly less in the cerebellum, occipital and temporal lobes, relatively low in the medulla and putamen, and lowest in the spinal cord. No expression detected in the pancreas. Highly expressed in fetal brain and occipital lobe, slightly less in the whole brain, frontal lobe, hippocampus, and lung, very low expression in cerebellum, medulla oblongata, temporal lobe, testis, kidney and appendix.

Its subcellular location is the cytoplasm. Atypical sulfotransferase family member with very low affinity for 3'-phospho-5'-adenylyl sulfate (PAPS) and very low catalytic activity towards L-triiodothyronine, thyroxine, estrone, p-nitrophenol, 2-naphthylamine, and 2-beta-naphthol. May have a role in the metabolism of drugs and neurotransmitters in the CNS. This Homo sapiens (Human) protein is Sulfotransferase 4A1 (SULT4A1).